The sequence spans 607 residues: Guanine nucleotide-binding protein-like 1 (607 aa).

Residues 1-14 (MPRKKPFSVKQKKK) show a composition bias toward basic residues. Residues 1–81 (MPRKKPFSVK…GPRGYDPNRY (81 aa)) are disordered. Positions 15–26 (QLQDKRERKRGL) are enriched in basic and acidic residues. 3 positions are modified to phosphoserine: serine 32, serine 33, and serine 34. 2 positions are modified to phosphothreonine: threonine 48 and threonine 50. Phosphoserine occurs at positions 51 and 68. Residues 178–418 (WRQLWRVLEM…LCDCPGLIFP (241 aa)) enclose the CP-type G domain. 225–228 (NKVD) serves as a coordination point for GTP. Phosphoserine is present on serine 324. Residues 367-374 (GFPNVGKS) and 411-415 (DCPGL) each bind GTP. A disordered region spans residues 547–607 (GPAGDEEEEE…PYALLGEDEC (61 aa)). Over residues 550–584 (GDEEEEEEEELSSSCEEEGEEDRDADEEGEGDEET) the composition is skewed to acidic residues. A phosphoserine mark is found at serine 561, serine 562, and serine 563.

It belongs to the TRAFAC class YlqF/YawG GTPase family.

In terms of biological role, possible regulatory or functional link with the histocompatibility cluster. This is Guanine nucleotide-binding protein-like 1 (GNL1) from Pan troglodytes (Chimpanzee).